The sequence spans 73 residues: Small ribosomal subunit protein bS18c (73 aa).

Belongs to the bacterial ribosomal protein bS18 family. Part of the 30S ribosomal subunit.

Its subcellular location is the plastid. The protein localises to the chloroplast. The chain is Small ribosomal subunit protein bS18c (rps18) from Guillardia theta (Cryptophyte).